The primary structure comprises 173 residues: ATP synthase subunit b (173 aa).

Residues 20-40 (IIATLAIFLVLMFLLKKVAWG) traverse the membrane as a helical segment.

This sequence belongs to the ATPase B chain family. As to quaternary structure, F-type ATPases have 2 components, F(1) - the catalytic core - and F(0) - the membrane proton channel. F(1) has five subunits: alpha(3), beta(3), gamma(1), delta(1), epsilon(1). F(0) has three main subunits: a(1), b(2) and c(10-14). The alpha and beta chains form an alternating ring which encloses part of the gamma chain. F(1) is attached to F(0) by a central stalk formed by the gamma and epsilon chains, while a peripheral stalk is formed by the delta and b chains.

The protein resides in the cell membrane. Its function is as follows. F(1)F(0) ATP synthase produces ATP from ADP in the presence of a proton or sodium gradient. F-type ATPases consist of two structural domains, F(1) containing the extramembraneous catalytic core and F(0) containing the membrane proton channel, linked together by a central stalk and a peripheral stalk. During catalysis, ATP synthesis in the catalytic domain of F(1) is coupled via a rotary mechanism of the central stalk subunits to proton translocation. In terms of biological role, component of the F(0) channel, it forms part of the peripheral stalk, linking F(1) to F(0). This chain is ATP synthase subunit b, found in Lysinibacillus sphaericus (strain C3-41).